Consider the following 428-residue polypeptide: Tyrosine--tRNA ligase (428 aa).

L-tyrosine is bound at residue tyrosine 41. Residues 46–55 carry the 'HIGH' region motif; sequence PTADSLHLGH. Lysine 148 is modified (N6-acetyllysine). Positions 179 and 183 each coordinate L-tyrosine. Residues 239–243 carry the 'KMSKS' region motif; sequence KFGKT. Lysine 242 contributes to the ATP binding site. The S4 RNA-binding domain maps to 361–418; it reads ADLMQALVDSELQPSRGQARKTIASNAITINGEKQSDPEYFFKEEDRLFGRFTLLRRG.

Belongs to the class-I aminoacyl-tRNA synthetase family. TyrS type 1 subfamily. Homodimer.

The protein localises to the cytoplasm. The catalysed reaction is tRNA(Tyr) + L-tyrosine + ATP = L-tyrosyl-tRNA(Tyr) + AMP + diphosphate + H(+). In terms of biological role, catalyzes the attachment of tyrosine to tRNA(Tyr) in a two-step reaction: tyrosine is first activated by ATP to form Tyr-AMP and then transferred to the acceptor end of tRNA(Tyr). This is Tyrosine--tRNA ligase from Escherichia coli O1:K1 / APEC.